We begin with the raw amino-acid sequence, 277 residues long: 4-hydroxy-3-methylbut-2-enyl diphosphate reductase (277 aa).

Cys12 lines the [4Fe-4S] cluster pocket. (2E)-4-hydroxy-3-methylbut-2-enyl diphosphate contacts are provided by His36 and His70. Residues His36 and His70 each coordinate dimethylallyl diphosphate. The isopentenyl diphosphate site is built by His36 and His70. Position 92 (Cys92) interacts with [4Fe-4S] cluster. (2E)-4-hydroxy-3-methylbut-2-enyl diphosphate is bound at residue His120. His120 contacts dimethylallyl diphosphate. His120 serves as a coordination point for isopentenyl diphosphate. Glu122 (proton donor) is an active-site residue. Residue Thr160 coordinates (2E)-4-hydroxy-3-methylbut-2-enyl diphosphate. A [4Fe-4S] cluster-binding site is contributed by Cys188. Ser216, Ser217, Asn218, and Ser260 together coordinate (2E)-4-hydroxy-3-methylbut-2-enyl diphosphate. The dimethylallyl diphosphate site is built by Ser216, Ser217, Asn218, and Ser260. The isopentenyl diphosphate site is built by Ser216, Ser217, Asn218, and Ser260.

The protein belongs to the IspH family. It depends on [4Fe-4S] cluster as a cofactor.

The enzyme catalyses isopentenyl diphosphate + 2 oxidized [2Fe-2S]-[ferredoxin] + H2O = (2E)-4-hydroxy-3-methylbut-2-enyl diphosphate + 2 reduced [2Fe-2S]-[ferredoxin] + 2 H(+). It carries out the reaction dimethylallyl diphosphate + 2 oxidized [2Fe-2S]-[ferredoxin] + H2O = (2E)-4-hydroxy-3-methylbut-2-enyl diphosphate + 2 reduced [2Fe-2S]-[ferredoxin] + 2 H(+). It participates in isoprenoid biosynthesis; dimethylallyl diphosphate biosynthesis; dimethylallyl diphosphate from (2E)-4-hydroxy-3-methylbutenyl diphosphate: step 1/1. The protein operates within isoprenoid biosynthesis; isopentenyl diphosphate biosynthesis via DXP pathway; isopentenyl diphosphate from 1-deoxy-D-xylulose 5-phosphate: step 6/6. Its function is as follows. Catalyzes the conversion of 1-hydroxy-2-methyl-2-(E)-butenyl 4-diphosphate (HMBPP) into a mixture of isopentenyl diphosphate (IPP) and dimethylallyl diphosphate (DMAPP). Acts in the terminal step of the DOXP/MEP pathway for isoprenoid precursor biosynthesis. In Sulfurovum sp. (strain NBC37-1), this protein is 4-hydroxy-3-methylbut-2-enyl diphosphate reductase.